Consider the following 269-residue polypeptide: 4-hydroxy-tetrahydrodipicolinate reductase (269 aa).

NAD(+) contacts are provided by residues 8-13, 98-100, and 122-125; these read GVAGRM, GTT, and APNM. His156 (proton donor/acceptor) is an active-site residue. His157 lines the (S)-2,3,4,5-tetrahydrodipicolinate pocket. The Proton donor role is filled by Lys160. Residue 166–167 coordinates (S)-2,3,4,5-tetrahydrodipicolinate; it reads GT.

Belongs to the DapB family.

It localises to the cytoplasm. The catalysed reaction is (S)-2,3,4,5-tetrahydrodipicolinate + NAD(+) + H2O = (2S,4S)-4-hydroxy-2,3,4,5-tetrahydrodipicolinate + NADH + H(+). It catalyses the reaction (S)-2,3,4,5-tetrahydrodipicolinate + NADP(+) + H2O = (2S,4S)-4-hydroxy-2,3,4,5-tetrahydrodipicolinate + NADPH + H(+). It participates in amino-acid biosynthesis; L-lysine biosynthesis via DAP pathway; (S)-tetrahydrodipicolinate from L-aspartate: step 4/4. Functionally, catalyzes the conversion of 4-hydroxy-tetrahydrodipicolinate (HTPA) to tetrahydrodipicolinate. The sequence is that of 4-hydroxy-tetrahydrodipicolinate reductase from Chromohalobacter salexigens (strain ATCC BAA-138 / DSM 3043 / CIP 106854 / NCIMB 13768 / 1H11).